A 749-amino-acid polypeptide reads, in one-letter code: Transcription factor RFX3 (749 aa).

A DNA-binding region (RFX-type winged-helix) is located at residues 183–258 (HLQWLLDNYE…YHYYGIRVKP (76 aa)). The tract at residues 663-699 (VSPGNLDKDEGSEVESEMDEELDDSSEPQAKREKTEL) is disordered. Residues 674-688 (SEVESEMDEELDDSS) show a composition bias toward acidic residues.

Belongs to the RFX family. In terms of assembly, heterodimer; heterodimerizes with RFX1 and RFX2, and RFX6.

It localises to the nucleus. Its function is as follows. Transcription factor required for ciliogenesis and islet cell differentiation during endocrine pancreas development. Essential for the differentiation of nodal monocilia and left-right asymmetry specification during embryogenesis. Required for the biogenesis of motile cilia by governing growth and beating efficiency of motile cells. Also required for ciliated ependymal cell differentiation. Regulates the expression of genes involved in ciliary assembly (DYNC2LI1, FOXJ1 and BBS4) and genes involved in ciliary motility (DNAH11, DNAH9 and DNAH5). Together with RFX6, participates in the differentiation of 4 of the 5 islet cell types during endocrine pancreas development, with the exception of pancreatic PP (polypeptide-producing) cells. Regulates transcription by forming a heterodimer with another RFX protein and binding to the X-box in the promoter of target genes. Represses transcription of MAP1A in non-neuronal cells but not in neuronal cells. The sequence is that of Transcription factor RFX3 (RFX3) from Macaca fascicularis (Crab-eating macaque).